Consider the following 320-residue polypeptide: Cytochrome f (320 aa).

Residues 1-35 form the signal peptide; sequence MQNRNTFSWVKEQMTRFISVSIMIYVITRTSIANA. Residues Tyr-36, Cys-56, Cys-59, and His-60 each coordinate heme. Residues 286 to 306 form a helical membrane-spanning segment; that stretch reads VQGLLFFLASVILAQIFLVLK.

Belongs to the cytochrome f family. In terms of assembly, the 4 large subunits of the cytochrome b6-f complex are cytochrome b6, subunit IV (17 kDa polypeptide, petD), cytochrome f and the Rieske protein, while the 4 small subunits are PetG, PetL, PetM and PetN. The complex functions as a dimer. Heme serves as cofactor.

It localises to the plastid. The protein localises to the chloroplast thylakoid membrane. Component of the cytochrome b6-f complex, which mediates electron transfer between photosystem II (PSII) and photosystem I (PSI), cyclic electron flow around PSI, and state transitions. The protein is Cytochrome f of Acorus calamus (Sweet flag).